Reading from the N-terminus, the 283-residue chain is Probable replication-associated protein repA1 (283 aa).

This sequence belongs to the IncFII RepA family.

Its function is as follows. This protein is essential for plasmid replication; it is involved in copy control functions. This Buchnera aphidicola subsp. Acyrthosiphon pisum (strain APS) (Acyrthosiphon pisum symbiotic bacterium) protein is Probable replication-associated protein repA1 (repA1).